Consider the following 74-residue polypeptide: DNA-directed RNA polymerase subunit omega (74 aa).

This sequence belongs to the RNA polymerase subunit omega family. The RNAP catalytic core consists of 2 alpha, 1 beta, 1 beta' and 1 omega subunit. When a sigma factor is associated with the core the holoenzyme is formed, which can initiate transcription.

It catalyses the reaction RNA(n) + a ribonucleoside 5'-triphosphate = RNA(n+1) + diphosphate. In terms of biological role, promotes RNA polymerase assembly. Latches the N- and C-terminal regions of the beta' subunit thereby facilitating its interaction with the beta and alpha subunits. This chain is DNA-directed RNA polymerase subunit omega, found in Lactobacillus acidophilus (strain ATCC 700396 / NCK56 / N2 / NCFM).